The sequence spans 516 residues: Ammonium transporter Amt1 (516 aa).

Helical transmembrane passes span 17 to 37 (YVWI…FALL), 59 to 79 (ALGV…VGGL), 101 to 121 (IDWL…SGAV), 130 to 150 (YVVF…GLTW), 170 to 190 (LDFA…LVGA), 214 to 234 (MLLA…FNVG), 258 to 278 (VALV…VVST), 286 to 306 (PLWM…AVPH), 307 to 327 (VTWW…LPAY), 342 to 362 (VFAV…VFAV), and 374 to 394 (VAGV…VFAA). Residues 426–516 (IGESGPDRGV…SAAVDGGENQ (91 aa)) are disordered. Residues 445–491 (NDVRTDGGNDVRTDGGNDVRTDGGNDVRTDGGNDVRTDGGNDVRTDG) show a composition bias toward basic and acidic residues.

Belongs to the ammonia transporter channel (TC 1.A.11.2) family. As to quaternary structure, homotrimer. Interacts with both GlnK1 and GlnK2 after ammonium shock. Interaction is rapid, reversible and dependent on nitrogen source.

It localises to the cell membrane. In terms of biological role, involved in the uptake of ammonium/ammonia (NH(4)(+)/NH(3)). Transport is electrogenic. This Haloferax mediterranei (strain ATCC 33500 / DSM 1411 / JCM 8866 / NBRC 14739 / NCIMB 2177 / R-4) (Halobacterium mediterranei) protein is Ammonium transporter Amt1.